Reading from the N-terminus, the 337-residue chain is Large ribosomal subunit protein uL3 (337 aa).

The disordered stretch occupies residues 1-20 (MASIHRPKRGSLAFSPRKRA).

This sequence belongs to the universal ribosomal protein uL3 family. Part of the 50S ribosomal subunit. Forms a cluster with proteins L14 and L24e.

In terms of biological role, one of the primary rRNA binding proteins, it binds directly near the 3'-end of the 23S rRNA, where it nucleates assembly of the 50S subunit. The protein is Large ribosomal subunit protein uL3 of Methanosarcina mazei (strain ATCC BAA-159 / DSM 3647 / Goe1 / Go1 / JCM 11833 / OCM 88) (Methanosarcina frisia).